The primary structure comprises 651 residues: Probable potassium transport system protein Kup (651 aa).

Residues 1 to 16 (MRDSPGSKSSSERWHD) are compositionally biased toward basic and acidic residues. The tract at residues 1–31 (MRDSPGSKSSSERWHDTMAVSDPTAEGKDES) is disordered. A run of 12 helical transmembrane segments spans residues 38–58 (FWAL…TSPL), 74–94 (VTPA…FIVV), 129–149 (LLLL…SMIT), 168–188 (LQDY…AVQS), 197–217 (AFAP…VLHI), 232–252 (AIHF…LVFL), 276–296 (WFCL…ALIL), 309–329 (LAPA…TVIA), 366–386 (IYLP…VLLF), 396–416 (YGIA…VVVW), 423–443 (PAAA…FFSA), and 448–468 (LFDG…LIWT).

This sequence belongs to the HAK/KUP transporter (TC 2.A.72) family.

It localises to the cell inner membrane. The catalysed reaction is K(+)(in) + H(+)(in) = K(+)(out) + H(+)(out). Functionally, transport of potassium into the cell. Likely operates as a K(+):H(+) symporter. The chain is Probable potassium transport system protein Kup from Nitrobacter winogradskyi (strain ATCC 25391 / DSM 10237 / CIP 104748 / NCIMB 11846 / Nb-255).